Consider the following 98-residue polypeptide: NADH-ubiquinone oxidoreductase chain 4L (98 aa).

The next 3 membrane-spanning stretches (helical) occupy residues 1-21 (MPFI…GLLM), 29-49 (SLLC…LLCL), and 61-81 (MILL…LVMV).

Belongs to the complex I subunit 4L family. As to quaternary structure, core subunit of respiratory chain NADH dehydrogenase (Complex I) which is composed of 45 different subunits.

The protein resides in the mitochondrion inner membrane. The catalysed reaction is a ubiquinone + NADH + 5 H(+)(in) = a ubiquinol + NAD(+) + 4 H(+)(out). In terms of biological role, core subunit of the mitochondrial membrane respiratory chain NADH dehydrogenase (Complex I) which catalyzes electron transfer from NADH through the respiratory chain, using ubiquinone as an electron acceptor. Part of the enzyme membrane arm which is embedded in the lipid bilayer and involved in proton translocation. This chain is NADH-ubiquinone oxidoreductase chain 4L (MT-ND4L), found in Dugong dugon (Dugong).